Consider the following 212-residue polypeptide: Large ribosomal subunit protein uL4 (212 aa).

The protein belongs to the universal ribosomal protein uL4 family. As to quaternary structure, part of the 50S ribosomal subunit.

In terms of biological role, one of the primary rRNA binding proteins, this protein initially binds near the 5'-end of the 23S rRNA. It is important during the early stages of 50S assembly. It makes multiple contacts with different domains of the 23S rRNA in the assembled 50S subunit and ribosome. Its function is as follows. Forms part of the polypeptide exit tunnel. This is Large ribosomal subunit protein uL4 from Caulobacter vibrioides (strain ATCC 19089 / CIP 103742 / CB 15) (Caulobacter crescentus).